The sequence spans 379 residues: Queuine tRNA-ribosyltransferase (379 aa).

Residue Asp-94 is the Proton acceptor of the active site. Substrate-binding positions include 94–98, Asp-148, Gln-191, and Gly-218; that span reads DSGGF. Positions 249 to 255 are RNA binding; the sequence is GVGSPDS. Catalysis depends on Asp-268, which acts as the Nucleophile. Positions 273–277 are RNA binding; important for wobble base 34 recognition; the sequence is TRIAR. 4 residues coordinate Zn(2+): Cys-306, Cys-308, Cys-311, and His-337.

This sequence belongs to the queuine tRNA-ribosyltransferase family. In terms of assembly, homodimer. Within each dimer, one monomer is responsible for RNA recognition and catalysis, while the other monomer binds to the replacement base PreQ1. Requires Zn(2+) as cofactor.

The enzyme catalyses 7-aminomethyl-7-carbaguanine + guanosine(34) in tRNA = 7-aminomethyl-7-carbaguanosine(34) in tRNA + guanine. The protein operates within tRNA modification; tRNA-queuosine biosynthesis. Catalyzes the base-exchange of a guanine (G) residue with the queuine precursor 7-aminomethyl-7-deazaguanine (PreQ1) at position 34 (anticodon wobble position) in tRNAs with GU(N) anticodons (tRNA-Asp, -Asn, -His and -Tyr). Catalysis occurs through a double-displacement mechanism. The nucleophile active site attacks the C1' of nucleotide 34 to detach the guanine base from the RNA, forming a covalent enzyme-RNA intermediate. The proton acceptor active site deprotonates the incoming PreQ1, allowing a nucleophilic attack on the C1' of the ribose to form the product. After dissociation, two additional enzymatic reactions on the tRNA convert PreQ1 to queuine (Q), resulting in the hypermodified nucleoside queuosine (7-(((4,5-cis-dihydroxy-2-cyclopenten-1-yl)amino)methyl)-7-deazaguanosine). The polypeptide is Queuine tRNA-ribosyltransferase (Bacillus cytotoxicus (strain DSM 22905 / CIP 110041 / 391-98 / NVH 391-98)).